Reading from the N-terminus, the 260-residue chain is MHSSVPAEIRSGQHQGHTAGLAPGCLQVNLVVLPASHAQAFGEYCALNPRPCPLILLTTPGQTDWTELGTGLDVRRDVPAYNIYENGVLSRTVPDLLNDWSDDLVTFALGFSFTFEHALLRAGIPVRNIATNTTVPMYQTNRETRSAGPFAGPLVVSMRPIPAAKVAKAHDISAQFPWARGAPIHSGDPKVLGIEDLDQPDWGDTSETRDGGVPVFWACGVTPQAALEEAELSLCITHRPGHMLVTDLPEHDPFRAGNLQ.

It belongs to the D-glutamate cyclase family.

This Dinoroseobacter shibae (strain DSM 16493 / NCIMB 14021 / DFL 12) protein is Putative hydro-lyase Dshi_0610.